The following is a 636-amino-acid chain: Probable potassium transport system protein Kup (636 aa).

12 helical membrane-spanning segments follow: residues 22 to 42 (VGLL…SPLY), 64 to 84 (ILSL…VMFI), 115 to 135 (LMVI…MITP), 150 to 170 (FDGI…ALFL), 182 to 202 (LFGP…VHGI), 220 to 240 (FFVV…LALT), 261 to 281 (WFIL…ALLL), 293 to 313 (LLAP…ATVI), 351 to 371 (IYIG…VIGF), 383 to 403 (VAVT…MLLL), 408 to 428 (PLLA…FFAA), and 433 to 453 (IVQG…LMST).

It belongs to the HAK/KUP transporter (TC 2.A.72) family.

The protein localises to the cell inner membrane. It carries out the reaction K(+)(in) + H(+)(in) = K(+)(out) + H(+)(out). Its function is as follows. Transport of potassium into the cell. Likely operates as a K(+):H(+) symporter. In Pseudomonas putida (strain ATCC 700007 / DSM 6899 / JCM 31910 / BCRC 17059 / LMG 24140 / F1), this protein is Probable potassium transport system protein Kup.